The sequence spans 358 residues: Protein FAM50 homolog (358 aa).

Residues alanine 104–lysine 113 are compositionally biased toward basic and acidic residues. The tract at residues alanine 104–glutamate 151 is disordered. Positions aspartate 122–glutamate 137 are enriched in acidic residues. Residues glycine 138–glutamate 151 are compositionally biased toward basic and acidic residues.

This sequence belongs to the FAM50 family.

The protein is Protein FAM50 homolog of Anopheles gambiae (African malaria mosquito).